The sequence spans 207 residues: Ribonuclease HII (207 aa).

Residues Gln20–Glu207 enclose the RNase H type-2 domain. 3 residues coordinate a divalent metal cation: Asp26, Glu27, and Asp118.

It belongs to the RNase HII family. Requires Mn(2+) as cofactor. Mg(2+) is required as a cofactor.

It is found in the cytoplasm. The catalysed reaction is Endonucleolytic cleavage to 5'-phosphomonoester.. Its function is as follows. Endonuclease that specifically degrades the RNA of RNA-DNA hybrids. The chain is Ribonuclease HII from Aliivibrio salmonicida (strain LFI1238) (Vibrio salmonicida (strain LFI1238)).